Here is a 91-residue protein sequence, read N- to C-terminus: Long neurotoxin OH-56 (91 aa).

A signal peptide spans Met-1–Thr-21. Cystine bridges form between Cys-24–Cys-42, Cys-35–Cys-63, Cys-48–Cys-52, Cys-67–Cys-78, and Cys-79–Cys-84.

This sequence belongs to the three-finger toxin family. Long-chain subfamily. Type II alpha-neurotoxin sub-subfamily. As to expression, expressed by the venom gland.

The protein resides in the secreted. Binds with high affinity to muscular (alpha-1/CHRNA1) and neuronal (alpha-7/CHRNA7) nicotinic acetylcholine receptor (nAChR) and inhibits acetylcholine from binding to the receptor, thereby impairing neuromuscular and neuronal transmission. The sequence is that of Long neurotoxin OH-56 from Ophiophagus hannah (King cobra).